The chain runs to 498 residues: Elastase (498 aa).

The N-terminal stretch at 1–23 (MKKVSTLDLLFVAIMGVSPAAFA) is a signal peptide. A propeptide spanning residues 24 to 197 (ADLIDVSKLP…VLDQWEGLAH (174 aa)) is cleaved from the precursor. Cysteine 227 and cysteine 255 are disulfide-bonded. Aspartate 333 contacts Ca(2+). Histidine 337 serves as a coordination point for Zn(2+). Residue glutamate 338 is part of the active site. Zn(2+) is bound by residues histidine 341 and glutamate 361. Positions 369, 372, 380, and 382 each coordinate Ca(2+). The active-site Proton donor is the histidine 420. An intrachain disulfide couples cysteine 467 to cysteine 494.

The protein belongs to the peptidase M4 family. As to quaternary structure, monomer. Ca(2+) serves as cofactor. It depends on Zn(2+) as a cofactor. Made as a membrane-associated pre-pro-protein, which is exported to the periplasm (yielding pro-elastase) with removal of the signal peptide. Under certain conditions pro-elastase can accumulate. The pro-peptide is removed in the periplasm yielding a (mature length) 33 kDa protein, probably by autocatalysis. The pro-peptide probably remains associated with elastase and can be secreted. Further alterations (perhaps processing) seems to be required before secretion into the extracellular space.

The protein localises to the secreted. The enzyme catalyses Hydrolysis of proteins including elastin, collagen types III and IV, fibronectin and immunoglobulin A, generally with bulky hydrophobic group at P1'. Insulin B chain cleavage pattern identical to that of thermolysin, but specificity differs in other respects.. Inhibited by phosphoramidon. Its function is as follows. Cleaves host elastin, collagen, IgG, and several complement components as well as endogenous pro-aminopeptidase. Autocatalyses processing of its pro-peptide. Processes the pro-peptide of pro-chitin-binding protein (cbpD). Involved in the pathogenesis of P.aeruginosa infections. In Pseudomonas aeruginosa (strain ATCC 15692 / DSM 22644 / CIP 104116 / JCM 14847 / LMG 12228 / 1C / PRS 101 / PAO1), this protein is Elastase (lasB).